A 1592-amino-acid polypeptide reads, in one-letter code: Serine/threonine-protein kinase mrck-1 (1592 aa).

Residues 1–954 (MAEPPPDDSA…IFSPVSISAM (954 aa)) form an involved in homo-dimerization region. The region spanning 83 to 351 (FEVLKVIGKG…LSDFQLHPFF (269 aa)) is the Protein kinase domain. Residues 89 to 97 (IGKGAFGEV) and lysine 112 each bind ATP. The Proton acceptor role is filled by aspartate 207. In terms of domain architecture, AGC-kinase C-terminal spans 352 to 426 (EGIDWNTIRD…THGSLLSDAR (75 aa)). Serine 415 carries the phosphoserine modification. Tyrosine 416 carries the post-translational modification Phosphotyrosine. 2 coiled-coil regions span residues 444-782 (ELME…KNNS) and 811-871 (LDLQ…IENS). Over residues 782–796 (SPLTTSNYIQNTPSG) the composition is skewed to polar residues. The disordered stretch occupies residues 782 to 801 (SPLTTSNYIQNTPSGWGSRR). Residues 955 to 1534 (ERGHNFERMK…FRTIGKDDRS (580 aa)) are involved in binding to membranes, with a preference for di-phosphorylated phosphoinositides (PIPs). A Phorbol-ester/DAG-type zinc finger spans residues 957–1007 (GHNFERMKIKTPTKCGHCTSILIGLDRQGLFCQSCQYACHVSCAERVSQSC). Zn(2+)-binding residues include histidine 958, cysteine 971, cysteine 974, cysteine 988, cysteine 991, histidine 996, cysteine 999, and cysteine 1007. Residues 1026-1154 (GTAYEGLVKT…WVVALSELKT (129 aa)) form the PH domain. The region spanning 1181–1479 (IRVAQCCAII…KPLSGDGILS (299 aa)) is the CNH domain. Residues 1544–1557 (ISTPSDFMHIVHMG) form the CRIB domain. The involved in interaction with cdc-42 (GTP-bound). Deletion prevents rescue of a null mutant; furthermore deleted form of mrck-1 is no longer recruited to the cell cortex and instead appears to be completely cytoplasmic stretch occupies residues 1544–1557 (ISTPSDFMHIVHMG).

The protein belongs to the protein kinase superfamily. AGC Ser/Thr protein kinase family. DMPK subfamily. In terms of assembly, homodimer, via N-terminal domains. Interacts (via the CRIB domain) with cdc-42 (GTP-bound), but with a lower affinity for cdc-42 bound to GDP; the interaction is direct and may play a role in the recruitment of mrck-1 to the apical membrane. Requires Mg(2+) as cofactor. As to expression, expressed in embryonic and L4 larval seam cells and in embryonic dorsal and ventral epidermal cells. Also expressed in the pharynx throughout development and in sublateral nerve cords in the L4 larva.

Its subcellular location is the cytoplasm. The protein localises to the cell cortex. It carries out the reaction L-seryl-[protein] + ATP = O-phospho-L-seryl-[protein] + ADP + H(+). It catalyses the reaction L-threonyl-[protein] + ATP = O-phospho-L-threonyl-[protein] + ADP + H(+). Functionally, serine/threonine-protein kinase. Involved in regulating endoderm precursor cell movements during early gastrulation; activates apical myosin and thereby increases actomyosin contractility and tension in the apical cell cortex, probably as a result of recruitment of mrck-1 to the cortex by a combination of interaction with active cdc-42 and membrane binding. May phosphorylate and inactivate the phosphatase mel-11, and thereby contribute to the regulation of myosin II contractility during embryonic elongation. Involved in controlling canal length and Golgi/ER integrity during excretory canal elongation. The chain is Serine/threonine-protein kinase mrck-1 from Caenorhabditis elegans.